We begin with the raw amino-acid sequence, 214 residues long: Adenylate kinase (214 aa).

10–15 lines the ATP pocket; sequence GAGKGT. Residues 30-59 form an NMP region; the sequence is STGDMLRAAVKAGTELGKQAKEIMDAGKLV. AMP contacts are provided by residues Thr31, Arg36, 57–59, 85–88, and Gln92; these read KLV and GFPR. Residues 122-159 are LID; it reads GRRVHAASGRVYHVKFNPPKVEGKDDVTGEDLTIRKDD. Residues Arg123 and 132-133 contribute to the ATP site; that span reads VY. Residues Arg156 and Arg167 each contribute to the AMP site. Arg200 contributes to the ATP binding site.

This sequence belongs to the adenylate kinase family. As to quaternary structure, monomer.

The protein localises to the cytoplasm. It catalyses the reaction AMP + ATP = 2 ADP. It functions in the pathway purine metabolism; AMP biosynthesis via salvage pathway; AMP from ADP: step 1/1. In terms of biological role, catalyzes the reversible transfer of the terminal phosphate group between ATP and AMP. Plays an important role in cellular energy homeostasis and in adenine nucleotide metabolism. The chain is Adenylate kinase from Pectobacterium carotovorum subsp. carotovorum (strain PC1).